A 351-amino-acid chain; its full sequence is Photosystem II D2 protein (351 aa).

The chain crosses the membrane as a helical span at residues 39–59 (CAYLAVGGWLTGTTFVTSWYT). Position 116 (His-116) interacts with chlorophyll a. The helical transmembrane segment at 123 to 139 (GFCLRQFEIARLVGLRP) threads the bilayer. Pheophytin a contacts are provided by Gln-128 and Asn-141. The helical transmembrane segment at 151-164 (VFVSVFLMYPLGQA) threads the bilayer. His-196 provides a ligand contact to chlorophyll a. A helical membrane pass occupies residues 206–226 (GALLCAIHGATVQNTLFEDGD). 2 residues coordinate a plastoquinone: His-213 and Phe-260. Position 213 (His-213) interacts with Fe cation. Position 267 (His-267) interacts with Fe cation. A helical membrane pass occupies residues 277-293 (GLWTSAFGIVGLALNLR).

This sequence belongs to the reaction center PufL/M/PsbA/D family. PSII is composed of 1 copy each of membrane proteins PsbA, PsbB, PsbC, PsbD, PsbE, PsbF, PsbH, PsbI, PsbJ, PsbK, PsbL, PsbM, PsbT, PsbX, PsbY, PsbZ, Psb30/Ycf12, at least 3 peripheral proteins of the oxygen-evolving complex and a large number of cofactors. It forms dimeric complexes. Requires The D1/D2 heterodimer binds P680, chlorophylls that are the primary electron donor of PSII, and subsequent electron acceptors. It shares a non-heme iron and each subunit binds pheophytin, quinone, additional chlorophylls, carotenoids and lipids. There is also a Cl(-1) ion associated with D1 and D2, which is required for oxygen evolution. The PSII complex binds additional chlorophylls, carotenoids and specific lipids. as cofactor.

The protein resides in the plastid. Its subcellular location is the chloroplast thylakoid membrane. The catalysed reaction is 2 a plastoquinone + 4 hnu + 2 H2O = 2 a plastoquinol + O2. In terms of biological role, photosystem II (PSII) is a light-driven water:plastoquinone oxidoreductase that uses light energy to abstract electrons from H(2)O, generating O(2) and a proton gradient subsequently used for ATP formation. It consists of a core antenna complex that captures photons, and an electron transfer chain that converts photonic excitation into a charge separation. The D1/D2 (PsbA/PsbD) reaction center heterodimer binds P680, the primary electron donor of PSII as well as several subsequent electron acceptors. D2 is needed for assembly of a stable PSII complex. This Pyropia yezoensis (Susabi-nori) protein is Photosystem II D2 protein.